The chain runs to 370 residues: Aminomethyltransferase (370 aa).

This sequence belongs to the GcvT family. As to quaternary structure, the glycine cleavage system is composed of four proteins: P, T, L and H.

The catalysed reaction is N(6)-[(R)-S(8)-aminomethyldihydrolipoyl]-L-lysyl-[protein] + (6S)-5,6,7,8-tetrahydrofolate = N(6)-[(R)-dihydrolipoyl]-L-lysyl-[protein] + (6R)-5,10-methylene-5,6,7,8-tetrahydrofolate + NH4(+). In terms of biological role, the glycine cleavage system catalyzes the degradation of glycine. In Corynebacterium aurimucosum (strain ATCC 700975 / DSM 44827 / CIP 107346 / CN-1) (Corynebacterium nigricans), this protein is Aminomethyltransferase.